The primary structure comprises 165 residues: Sporulation-specific cell division protein SsgB (165 aa).

The segment at 1 to 21 (MLVGNSWTRSLEPVSGHEHTE) is disordered.

This sequence belongs to the SsgA family. Interacts with SsgA. Interacts with FtsZ (via N-terminus).

The protein resides in the cell septum. Involved in sporulation-specific cell division. Required for early stages of sporulation. Important in the process of growth cessation prior to sporulation-specific cell division. Recruits cell division protein FtsZ to the future septum sites and tethers the contractile ring structure (Z ring) to the cytoplasmic membrane during sporulation. Stimulates polymerization and filament length of FtsZ in vitro. The chain is Sporulation-specific cell division protein SsgB from Kineococcus radiotolerans (strain ATCC BAA-149 / DSM 14245 / SRS30216).